We begin with the raw amino-acid sequence, 384 residues long: Urea transporter 1 (384 aa).

The disordered stretch occupies residues 1 to 23 (MDDNPTAVKLDQGGNQAPQGQGR). 5 helical membrane-spanning segments follow: residues 61–81 (ISQV…VGLL), 85–105 (PWCA…ALLL), 111–131 (AITA…MAIY), 138–158 (FWWL…FSSA), and 169–189 (PVFT…TGHF). N-linked (GlcNAc...) asparagine glycosylation occurs at N206. Helical transmembrane passes span 237 to 257 (GGIF…HAAI), 279 to 299 (GLWG…FMAL), and 327 to 347 (VVGL…FLLL).

It belongs to the urea transporter family. Homotrimer; each subunit contains a pore through which urea permeates. Identified in a complex with STOM.

It localises to the cell membrane. Its subcellular location is the basolateral cell membrane. It catalyses the reaction urea(in) = urea(out). Mediates the transport of urea driven by a concentration gradient across the cell membranes of erythrocytes and the renal inner medullary collecting duct which is critical to the urinary concentrating mechanism. Facilitates water transport in erythrocytes. The sequence is that of Urea transporter 1 (SLC14A1) from Ovis aries (Sheep).